Reading from the N-terminus, the 620-residue chain is MALLQIAEPGQTAAPHQHRLAVGIDLGTTNSLVAAVRSGVADTLPDENARHSLPSIVRYTDTGIEAGFEAEAHSAKDPQNTIVSVKRFMGRSLADIQSGIQDLPYRFQASENGLPLFATEQGTVNPVQISSEILKPLISRAESTLGGDLEGIVITVPAYFDDAQRQGTKDAAALLGVKVLRLLNEPTAAAIAYGLDSGQEGVIAIYDLGGGTFDISILRLNKGVFEVLATGGDSALGGDDFDHLLHHHLLQEWQIDAPSASVSRQLLIESRRVKEVLTDESEVTATLLLDDGTTLTHVVTKSLFDSLITSLVKKTVASCRRALRDAGIKADEVLETVLVGGSTRVPLVRELVEGFFGKAPLTSIDPDRVVAIGAAIQADILVGNKPESDLLLLDVLPLSLGIETMGGLVEKVVSRNTTIPVAKAQEFTTFKDGQTAMAFHVVQGERELVDDCRSLARFTLKGIPPLAAGAAHIRVTFQVDADGLLSVTAMEKSTGVQSSIQVKPSFGLTDEEIGSMLKDSMANAKDDIARRMLAEQQVEAARVLETLSAALAKDGELLTADERNAIEQSMAVLVEVGGQDDADAIEKAIEALDASTQDFAAKRMDNSIKLALKGQSVDSI.

The protein belongs to the heat shock protein 70 family.

In terms of biological role, chaperone involved in the maturation of iron-sulfur cluster-containing proteins. Has a low intrinsic ATPase activity which is markedly stimulated by HscB. In Shewanella sediminis (strain HAW-EB3), this protein is Chaperone protein HscA homolog.